A 383-amino-acid chain; its full sequence is Probable acyl-CoA dehydrogenase YdiO (383 aa).

It belongs to the acyl-CoA dehydrogenase family. The cofactor is FAD.

It catalyses the reaction a 2,3-saturated acyl-CoA + A = a 2,3-dehydroacyl-CoA + AH2. The polypeptide is Probable acyl-CoA dehydrogenase YdiO (ydiO) (Escherichia coli O157:H7).